Here is a 948-residue protein sequence, read N- to C-terminus: UvrABC system protein A (948 aa).

33–40 (GLSGSGKS) serves as a coordination point for ATP. The C4-type zinc finger occupies 252–279 (CPICGFSIGELEPRMFSFNSPFGACPTC). ABC transporter domains lie at 309-587 (WIPT…KKSL) and 607-935 (ASDR…KYLK). Residue 639 to 646 (GVSGSGKS) participates in ATP binding. The C4-type zinc finger occupies 738 to 764 (CEACKGDGIIKIEMHFLPDVYVPCEVC).

This sequence belongs to the ABC transporter superfamily. UvrA family. As to quaternary structure, forms a heterotetramer with UvrB during the search for lesions.

Its subcellular location is the cytoplasm. Functionally, the UvrABC repair system catalyzes the recognition and processing of DNA lesions. UvrA is an ATPase and a DNA-binding protein. A damage recognition complex composed of 2 UvrA and 2 UvrB subunits scans DNA for abnormalities. When the presence of a lesion has been verified by UvrB, the UvrA molecules dissociate. In Staphylococcus aureus (strain MSSA476), this protein is UvrABC system protein A.